The sequence spans 300 residues: uncharacterized protein (300 aa).

It belongs to the histone deacetylase family.

In terms of biological role, putative deacetylase. This is an uncharacterized protein from Picosynechococcus sp. (strain ATCC 27264 / PCC 7002 / PR-6) (Agmenellum quadruplicatum).